A 178-amino-acid polypeptide reads, in one-letter code: Transcriptional repressor NrdR (178 aa).

Residues 1-21 are disordered; sequence MRCPFCGHEDTQVKDSRPHED. A zinc finger spans residues 3-34; that stretch reads CPFCGHEDTQVKDSRPHEDGAAIRRRRICAAC. Basic and acidic residues predominate over residues 7–21; it reads GHEDTQVKDSRPHED. In terms of domain architecture, ATP-cone spans 49 to 139; that stretch reads LYVVKADDRR…VHWDFRETKD (91 aa).

It belongs to the NrdR family. Zn(2+) is required as a cofactor.

In terms of biological role, negatively regulates transcription of bacterial ribonucleotide reductase nrd genes and operons by binding to NrdR-boxes. This is Transcriptional repressor NrdR from Gluconacetobacter diazotrophicus (strain ATCC 49037 / DSM 5601 / CCUG 37298 / CIP 103539 / LMG 7603 / PAl5).